A 446-amino-acid polypeptide reads, in one-letter code: Phosphoglucosamine mutase (446 aa).

The Phosphoserine intermediate role is filled by Ser100. Positions 100, 241, 243, and 245 each coordinate Mg(2+). Residue Ser100 is modified to Phosphoserine.

It belongs to the phosphohexose mutase family. It depends on Mg(2+) as a cofactor. Activated by phosphorylation.

It catalyses the reaction alpha-D-glucosamine 1-phosphate = D-glucosamine 6-phosphate. In terms of biological role, catalyzes the conversion of glucosamine-6-phosphate to glucosamine-1-phosphate. The sequence is that of Phosphoglucosamine mutase from Methylobacterium sp. (strain 4-46).